A 260-amino-acid chain; its full sequence is CD320 antigen (260 aa).

The signal sequence occupies residues M1 to A28. The Extracellular portion of the chain corresponds to A29–G208. The region spanning S46 to R83 is the LDL-receptor class A 1 domain. Disulfide bonds link C47–C60, C54–C73, and C67–C82. Ca(2+)-binding residues include W65, D68, D70, D72, D78, and E79. N118 carries an N-linked (GlcNAc...) asparagine glycan. The region spanning P123–D160 is the LDL-receptor class A 2 domain. 3 cysteine pairs are disulfide-bonded: C124-C137, C131-C150, and C144-C159. 6 residues coordinate Ca(2+): W142, D145, H147, D149, D155, and E156. N-linked (GlcNAc...) asparagine glycosylation occurs at N185. Residues V209 to L229 traverse the membrane as a helical segment. The Cytoplasmic portion of the chain corresponds to R230 to I260.

In terms of assembly, interacts (via LDL-receptor class A domains) with TCN2.

The protein localises to the cell membrane. Its function is as follows. Receptor for transcobalamin saturated with cobalamin (TCbl). Plays an important role in cobalamin uptake. Plasma membrane protein that is expressed on follicular dendritic cells (FDC) and mediates interaction with germinal center B cells. Functions as a costimulator to promote B cell responses to antigenic stimuli; promotes B cell differentiation and proliferation. Germinal center-B (GC-B) cells differentiate into memory B-cells and plasma cells (PC) through interaction with T-cells and follicular dendritic cells (FDC). CD320 augments the proliferation of PC precursors generated by IL-10. In Mus musculus (Mouse), this protein is CD320 antigen (Cd320).